The chain runs to 490 residues: MAQKLNLLNLAVPPVTHRSNFPSTFTFGVATSAYQIEGGWNEGKKGPSIWDKFTHIEGKILDGSNGDVAVDHYHRYKEDVDLIGQLGFGAYRFSISWSRIFPDGLGTEVNEEGIAFYNDLINTLLEKGIQPYVTLYHWDLPSHLQEAIGGWTNRKIVDYFGLYADACFANFGDRVKHWITLNEPLQTSVNGHCIGIFAPGRNEKPLIEPYLVSHHQVLAHATAVSIYRSKYKESQGGQIGLSVDCEWAEPNSEKPEDKVAADRRIDFQLGWFLDPLFFGDYPASMRQKLGDNLPRFTPEEKEFMLQNSWDFLGLNHYTSRLISHVSNKEAESNFYQAQELERIVELENGDLIGERAASDWLYAVPWGIRKTLNYMSKKYNHPPIFITENGMDDEDDGSASIHDMLDDKRRVDYFKSYLANVSQAIEDGVDIKGYFAWSLLDNFEWAQGYTKRFGLVYVDYKNGLTRHPKSSAYWFMKFLKGDEENKGKKE.

Residues Gln35, His137, 182–183 (NE), Tyr317, and Glu388 contribute to the a beta-D-glucoside site. Catalysis depends on Glu183, which acts as the Proton donor. Glu388 acts as the Nucleophile in catalysis. N-linked (GlcNAc...) asparagine glycosylation is present at Asn420. Residues Trp437, 444–445 (EW), and Phe453 each bind a beta-D-glucoside.

The protein belongs to the glycosyl hydrolase 1 family. As to expression, expressed at low levels predominantly in root epidermal cells.

It carries out the reaction Hydrolysis of terminal, non-reducing beta-D-glucosyl residues with release of beta-D-glucose.. In terms of biological role, glucosidase that hydrolyzes scopolin and various beta-glucosides, cellooligosaccharides (mainly cellotriose) and laminarioligosaccharides. Can use p-nitrophenyl-beta-glucosides (pNP beta-Glc) and p-nitrophenyl-beta-D-fucosides (pNP beta-D-Fuc) as substrates, and, to a lower extent, beta-galactosides, beta-mannosides and beta-xylosides. Involved in the secretion of root-derived phenolics upon iron ions (Fe) depletion. Promotes disease resistance toward B.cinerea, H.arabidopsidis and P.syringae pv. tomato DC3000. Required during rhizobacteria-mediated (e.g. P.fluorescens WCS417r) broad-spectrum induced systemic resistance (ISR) against several pathogens. The sequence is that of Beta-glucosidase 42 from Arabidopsis thaliana (Mouse-ear cress).